The sequence spans 158 residues: Cyclic pyranopterin monophosphate synthase (158 aa).

Substrate-binding positions include 76-78 and 114-115; these read LCH and ME. The active site involves aspartate 129.

It belongs to the MoaC family. As to quaternary structure, homohexamer; trimer of dimers.

The catalysed reaction is (8S)-3',8-cyclo-7,8-dihydroguanosine 5'-triphosphate = cyclic pyranopterin phosphate + diphosphate. It participates in cofactor biosynthesis; molybdopterin biosynthesis. In terms of biological role, catalyzes the conversion of (8S)-3',8-cyclo-7,8-dihydroguanosine 5'-triphosphate to cyclic pyranopterin monophosphate (cPMP). This chain is Cyclic pyranopterin monophosphate synthase, found in Shewanella piezotolerans (strain WP3 / JCM 13877).